Here is a 434-residue protein sequence, read N- to C-terminus: Methylenetetrahydrofolate--tRNA-(uracil-5-)-methyltransferase TrmFO (434 aa).

An FAD-binding site is contributed by 9–14 (GGGLAG).

Belongs to the MnmG family. TrmFO subfamily. FAD is required as a cofactor.

It localises to the cytoplasm. It catalyses the reaction uridine(54) in tRNA + (6R)-5,10-methylene-5,6,7,8-tetrahydrofolate + NADH + H(+) = 5-methyluridine(54) in tRNA + (6S)-5,6,7,8-tetrahydrofolate + NAD(+). It carries out the reaction uridine(54) in tRNA + (6R)-5,10-methylene-5,6,7,8-tetrahydrofolate + NADPH + H(+) = 5-methyluridine(54) in tRNA + (6S)-5,6,7,8-tetrahydrofolate + NADP(+). Its function is as follows. Catalyzes the folate-dependent formation of 5-methyl-uridine at position 54 (M-5-U54) in all tRNAs. The chain is Methylenetetrahydrofolate--tRNA-(uracil-5-)-methyltransferase TrmFO from Geobacter sulfurreducens (strain ATCC 51573 / DSM 12127 / PCA).